The primary structure comprises 502 residues: Cytochrome P450 71B17 (502 aa).

The helical transmembrane segment at M1–C21 threads the bilayer. C444 is a heme binding site.

Belongs to the cytochrome P450 family. Heme is required as a cofactor.

Its subcellular location is the membrane. The chain is Cytochrome P450 71B17 (CYP71B17) from Arabidopsis thaliana (Mouse-ear cress).